The chain runs to 149 residues: UPF0178 protein NT01CX_0440 (149 aa).

This sequence belongs to the UPF0178 family.

The protein is UPF0178 protein NT01CX_0440 of Clostridium novyi (strain NT).